We begin with the raw amino-acid sequence, 148 residues long: Large-conductance mechanosensitive channel (148 aa).

2 consecutive transmembrane segments (helical) span residues 9–29 and 79–99; these read AFAV…GAAF and IQTV…VKAI.

Belongs to the MscL family. In terms of assembly, homopentamer.

The protein localises to the cell inner membrane. Channel that opens in response to stretch forces in the membrane lipid bilayer. May participate in the regulation of osmotic pressure changes within the cell. This chain is Large-conductance mechanosensitive channel, found in Pseudomonas savastanoi pv. phaseolicola (strain 1448A / Race 6) (Pseudomonas syringae pv. phaseolicola (strain 1448A / Race 6)).